Reading from the N-terminus, the 254-residue chain is Alcohol dehydrogenase (254 aa).

An NAD(+)-binding site is contributed by 10-33 (FVAGLGGIGLETSREIVKSGPKNL). S138 is a binding site for substrate. Y151 acts as the Proton acceptor in catalysis.

Belongs to the short-chain dehydrogenases/reductases (SDR) family. As to quaternary structure, homodimer.

It carries out the reaction a primary alcohol + NAD(+) = an aldehyde + NADH + H(+). The enzyme catalyses a secondary alcohol + NAD(+) = a ketone + NADH + H(+). The polypeptide is Alcohol dehydrogenase (Adh) (Scaptomyza crassifemur (Fruit fly)).